The chain runs to 204 residues: uncharacterized protein (204 aa).

A disordered region spans residues Met1–Pro20.

This is an uncharacterized protein from Frog virus 3 (isolate Goorha) (FV-3).